We begin with the raw amino-acid sequence, 243 residues long: 1-(5-phosphoribosyl)-5-[(5-phosphoribosylamino)methylideneamino] imidazole-4-carboxamide isomerase (243 aa).

Residue Asp-8 is the Proton acceptor of the active site. Asp-129 (proton donor) is an active-site residue.

It belongs to the HisA/HisF family.

The protein localises to the cytoplasm. It catalyses the reaction 1-(5-phospho-beta-D-ribosyl)-5-[(5-phospho-beta-D-ribosylamino)methylideneamino]imidazole-4-carboxamide = 5-[(5-phospho-1-deoxy-D-ribulos-1-ylimino)methylamino]-1-(5-phospho-beta-D-ribosyl)imidazole-4-carboxamide. It participates in amino-acid biosynthesis; L-histidine biosynthesis; L-histidine from 5-phospho-alpha-D-ribose 1-diphosphate: step 4/9. The polypeptide is 1-(5-phosphoribosyl)-5-[(5-phosphoribosylamino)methylideneamino] imidazole-4-carboxamide isomerase (Nitratidesulfovibrio vulgaris (strain DSM 19637 / Miyazaki F) (Desulfovibrio vulgaris)).